Here is a 157-residue protein sequence, read N- to C-terminus: Ribosomal RNA large subunit methyltransferase H (157 aa).

Residues Leu73, Gly104, and 121–126 (LSPLTL) contribute to the S-adenosyl-L-methionine site.

This sequence belongs to the RNA methyltransferase RlmH family. In terms of assembly, homodimer.

The protein resides in the cytoplasm. The enzyme catalyses pseudouridine(1915) in 23S rRNA + S-adenosyl-L-methionine = N(3)-methylpseudouridine(1915) in 23S rRNA + S-adenosyl-L-homocysteine + H(+). Its function is as follows. Specifically methylates the pseudouridine at position 1915 (m3Psi1915) in 23S rRNA. This Acidithiobacillus ferrooxidans (strain ATCC 23270 / DSM 14882 / CIP 104768 / NCIMB 8455) (Ferrobacillus ferrooxidans (strain ATCC 23270)) protein is Ribosomal RNA large subunit methyltransferase H.